We begin with the raw amino-acid sequence, 84 residues long: Small ribosomal subunit protein uS15 (84 aa).

This sequence belongs to the universal ribosomal protein uS15 family. Part of the 30S ribosomal subunit. Forms a bridge to the 50S subunit in the 70S ribosome, contacting the 23S rRNA.

One of the primary rRNA binding proteins, it binds directly to 16S rRNA where it helps nucleate assembly of the platform of the 30S subunit by binding and bridging several RNA helices of the 16S rRNA. Functionally, forms an intersubunit bridge (bridge B4) with the 23S rRNA of the 50S subunit in the ribosome. The polypeptide is Small ribosomal subunit protein uS15 (Thermosipho africanus (strain TCF52B)).